A 502-amino-acid polypeptide reads, in one-letter code: Sodium/proline symporter (502 aa).

A run of 13 helical transmembrane segments spans residues 6-26 (PMLV…FIAW), 42-62 (LGPF…WLLM), 68-88 (IFLS…GAWI), 127-147 (IISA…GIVA), 163-183 (ALWA…FLAV), 192-212 (SLMI…VGGF), 235-255 (FVAI…PHIL), 276-296 (TWMI…IAYF), 320-340 (ILFN…AVMS), 371-391 (LVWV…ALAA), 398-418 (LGLV…VVLF), 430-450 (ALAG…YGWL), and 452-472 (LYEI…FSLL).

This sequence belongs to the sodium:solute symporter (SSF) (TC 2.A.21) family.

It is found in the cell inner membrane. It catalyses the reaction L-proline(in) + Na(+)(in) = L-proline(out) + Na(+)(out). Its function is as follows. Catalyzes the sodium-dependent uptake of extracellular L-proline. The polypeptide is Sodium/proline symporter (Salmonella typhimurium (strain LT2 / SGSC1412 / ATCC 700720)).